Consider the following 274-residue polypeptide: 4-hydroxy-tetrahydrodipicolinate reductase (274 aa).

Residues 8–13 (GALGRM), Glu-34, 102–104 (GTT), and 128–131 (SQNF) contribute to the NAD(+) site. Residue His-160 is the Proton donor/acceptor of the active site. His-161 contributes to the (S)-2,3,4,5-tetrahydrodipicolinate binding site. Residue Lys-164 is the Proton donor of the active site. 170 to 171 (GT) provides a ligand contact to (S)-2,3,4,5-tetrahydrodipicolinate.

Belongs to the DapB family.

The protein resides in the cytoplasm. The catalysed reaction is (S)-2,3,4,5-tetrahydrodipicolinate + NAD(+) + H2O = (2S,4S)-4-hydroxy-2,3,4,5-tetrahydrodipicolinate + NADH + H(+). The enzyme catalyses (S)-2,3,4,5-tetrahydrodipicolinate + NADP(+) + H2O = (2S,4S)-4-hydroxy-2,3,4,5-tetrahydrodipicolinate + NADPH + H(+). It participates in amino-acid biosynthesis; L-lysine biosynthesis via DAP pathway; (S)-tetrahydrodipicolinate from L-aspartate: step 4/4. In terms of biological role, catalyzes the conversion of 4-hydroxy-tetrahydrodipicolinate (HTPA) to tetrahydrodipicolinate. The chain is 4-hydroxy-tetrahydrodipicolinate reductase from Methanocaldococcus jannaschii (strain ATCC 43067 / DSM 2661 / JAL-1 / JCM 10045 / NBRC 100440) (Methanococcus jannaschii).